The following is a 181-amino-acid chain: Protein CRABS CLAW (181 aa).

A C4-type zinc finger spans residues C26 to C53. The segment at G80–Y122 is disordered. Positions S87 to Q99 are enriched in low complexity. A compositionally biased stretch (pro residues) spans P100–V109.

Belongs to the YABBY family. As to expression, restricted to flowers, mostly in carpels and nectaries. Expressed at low levels in sepal primordia (buds), sepal receptacle and developing petal. Not detected in placental tissues, septum, stigma and ovules.

The protein localises to the nucleus. In terms of biological role, transcription factor required for the initiation of nectary development. Also involved in suppressing early radial growth of the gynoecium, in promoting its later elongation and in fusion of its carpels by regulating both cell division and expansion. Establishes the polar differentiation in the carpels by specifying abaxial cell fate in the ovary wall. Regulates both cell division and expansion. This is Protein CRABS CLAW from Arabidopsis thaliana (Mouse-ear cress).